The primary structure comprises 418 residues: UDP-N-acetylglucosamine 1-carboxyvinyltransferase (418 aa).

23–24 (KN) contacts phosphoenolpyruvate. Arg92 lines the UDP-N-acetyl-alpha-D-glucosamine pocket. Cys116 serves as the catalytic Proton donor. At Cys116 the chain carries 2-(S-cysteinyl)pyruvic acid O-phosphothioketal. UDP-N-acetyl-alpha-D-glucosamine contacts are provided by residues 121-125 (RPVDL), 161-164 (KVSV), Asp306, and Ile328.

It belongs to the EPSP synthase family. MurA subfamily.

The protein localises to the cytoplasm. The enzyme catalyses phosphoenolpyruvate + UDP-N-acetyl-alpha-D-glucosamine = UDP-N-acetyl-3-O-(1-carboxyvinyl)-alpha-D-glucosamine + phosphate. Its pathway is cell wall biogenesis; peptidoglycan biosynthesis. Cell wall formation. Adds enolpyruvyl to UDP-N-acetylglucosamine. This Vibrio parahaemolyticus serotype O3:K6 (strain RIMD 2210633) protein is UDP-N-acetylglucosamine 1-carboxyvinyltransferase.